Consider the following 67-residue polypeptide: UPF0337 protein SP_1805 (67 aa).

A disordered region spans residues 1–30; sequence MSVEEKLNQAKGSIKEGVGKAIGDEKMEKE.

It belongs to the UPF0337 (CsbD) family.

This Streptococcus pneumoniae serotype 4 (strain ATCC BAA-334 / TIGR4) protein is UPF0337 protein SP_1805.